The sequence spans 464 residues: NAD(P) transhydrogenase subunit beta (464 aa).

The next 6 helical transmembrane spans lie at valine 54–isoleucine 74, leucine 86–leucine 106, valine 126–phenylalanine 146, histidine 164–threonine 184, phenylalanine 191–alanine 211, and alanine 227–valine 247. NADP(+) contacts are provided by residues tyrosine 316–glycine 317, valine 348–proline 353, glycine 390–valine 394, lysine 425–tyrosine 432, and aspartate 451–alanine 452.

Belongs to the PNT beta subunit family. In terms of assembly, complex of an alpha and a beta chain; in Rhodospirillum, the alpha chain seems to be made of two subunits.

Its subcellular location is the cell inner membrane. It catalyses the reaction NAD(+) + NADPH + H(+)(in) = NADH + NADP(+) + H(+)(out). Functionally, the transhydrogenation between NADH and NADP is coupled to respiration and ATP hydrolysis and functions as a proton pump across the membrane. In Rhodospirillum rubrum (strain ATCC 11170 / ATH 1.1.1 / DSM 467 / LMG 4362 / NCIMB 8255 / S1), this protein is NAD(P) transhydrogenase subunit beta (pntB).